Reading from the N-terminus, the 121-residue chain is Large ribosomal subunit protein uL22 (121 aa).

This sequence belongs to the universal ribosomal protein uL22 family. As to quaternary structure, part of the 50S ribosomal subunit.

This protein binds specifically to 23S rRNA; its binding is stimulated by other ribosomal proteins, e.g. L4, L17, and L20. It is important during the early stages of 50S assembly. It makes multiple contacts with different domains of the 23S rRNA in the assembled 50S subunit and ribosome. Functionally, the globular domain of the protein is located near the polypeptide exit tunnel on the outside of the subunit, while an extended beta-hairpin is found that lines the wall of the exit tunnel in the center of the 70S ribosome. This Parasynechococcus marenigrum (strain WH8102) protein is Large ribosomal subunit protein uL22.